The primary structure comprises 302 residues: HPr kinase/phosphorylase (302 aa).

Residues histidine 136 and lysine 157 contribute to the active site. An ATP-binding site is contributed by 151–158 (GESGIGKS). Residue serine 158 coordinates Mg(2+). The active-site Proton acceptor; for phosphorylation activity. Proton donor; for dephosphorylation activity is aspartate 175. The segment at 198-207 (LEVRGLGIID) is important for the catalytic mechanism of both phosphorylation and dephosphorylation. Glutamate 199 lines the Mg(2+) pocket. The active site involves arginine 240. Residues 261–266 (PIRPGR) are important for the catalytic mechanism of dephosphorylation.

It belongs to the HPrK/P family. In terms of assembly, homohexamer. Requires Mg(2+) as cofactor.

It carries out the reaction [HPr protein]-L-serine + ATP = [HPr protein]-O-phospho-L-serine + ADP + H(+). The catalysed reaction is [HPr protein]-O-phospho-L-serine + phosphate + H(+) = [HPr protein]-L-serine + diphosphate. Catalyzes the ATP- as well as the pyrophosphate-dependent phosphorylation of a specific serine residue in HPr, a phosphocarrier protein of the phosphoenolpyruvate-dependent sugar phosphotransferase system (PTS). HprK/P also catalyzes the pyrophosphate-producing, inorganic phosphate-dependent dephosphorylation (phosphorolysis) of seryl-phosphorylated HPr (P-Ser-HPr). The two antagonistic activities of HprK/P are regulated by several intracellular metabolites, which change their concentration in response to the absence or presence of rapidly metabolisable carbon sources (glucose, fructose, etc.) in the growth medium. Therefore, by controlling the phosphorylation state of HPr, HPrK/P is a sensor enzyme that plays a major role in the regulation of carbon metabolism and sugar transport: it mediates carbon catabolite repression (CCR), and regulates PTS-catalyzed carbohydrate uptake and inducer exclusion. The polypeptide is HPr kinase/phosphorylase (Clostridium beijerinckii (strain ATCC 51743 / NCIMB 8052) (Clostridium acetobutylicum)).